Consider the following 248-residue polypeptide: MNNISNRRQPPASLAPRDLAALIDISAVQAFHTEADVRELAGIAVAEGFIAAHALPNFVPLLRSLVPSGGLTLVGGPVGFPSGGHSTRTKTAEAVELAENGAQELDMMINVGRIKSGDFGYVRSEIRAIVEAIAPVPLKVILELAHLTDEEIRAASAIVAESGAAFVKTGTGWTPSATTLEKLKLIVETVGGAVEIKASGGIRSLDAIAGMMRLGVTRFGINTQVAVDLVRQCAALPGGRLDIAGKAG.

The active-site Proton donor/acceptor is the Asp-106. Residue Lys-168 is the Schiff-base intermediate with acetaldehyde of the active site. The Proton donor/acceptor role is filled by Lys-197.

Belongs to the DeoC/FbaB aldolase family. DeoC type 1 subfamily.

The protein localises to the cytoplasm. The enzyme catalyses 2-deoxy-D-ribose 5-phosphate = D-glyceraldehyde 3-phosphate + acetaldehyde. The protein operates within carbohydrate degradation; 2-deoxy-D-ribose 1-phosphate degradation; D-glyceraldehyde 3-phosphate and acetaldehyde from 2-deoxy-alpha-D-ribose 1-phosphate: step 2/2. Functionally, catalyzes a reversible aldol reaction between acetaldehyde and D-glyceraldehyde 3-phosphate to generate 2-deoxy-D-ribose 5-phosphate. This is Deoxyribose-phosphate aldolase from Rhizobium meliloti (strain 1021) (Ensifer meliloti).